The primary structure comprises 49 residues: MRVNITLACTECKQRNYNTSKNKKSNPDRMELKKYCKFCKTHTAHRETK.

The protein belongs to the bacterial ribosomal protein bL33 family.

The sequence is that of Large ribosomal subunit protein bL33 from Alkaliphilus oremlandii (strain OhILAs) (Clostridium oremlandii (strain OhILAs)).